Here is a 245-residue protein sequence, read N- to C-terminus: MDRSPLFLIIMGAPGSGKGTQSKLLASQLSLLHISSGDLLRGAVSKDTPLSQEIKSYLDQGKLLPDTLVWKLVHEKLDEFQQDTLLRRLSFLSRSENSAILDGFPRTVTQAKLLHEFLSSYFPNYKVILLDISDEEVLNRLTSRYICPACQGIYNEQQGFSSCPKCSVELIRRSDDTLEVILDRIQTYKQETQPVLDYYTEKQKLITIDANAPTQQVFQSILDSLSASLVYQERDCCNCDCDDED.

Position 15 to 20 (15 to 20 (GSGKGT)) interacts with ATP. The tract at residues 35-64 (SSGDLLRGAVSKDTPLSQEIKSYLDQGKLL) is NMP. AMP is bound by residues S36, R41, 62–64 (KLL), 103–106 (GFPR), and Q110. Residues 143 to 176 (SRYICPACQGIYNEQQGFSSCPKCSVELIRRSDD) form an LID region. R144 is a binding site for ATP. Positions 147 and 150 each coordinate Zn(2+). Residue 153–154 (IY) participates in ATP binding. Zn(2+) contacts are provided by C163 and C166. AMP is bound by residues R173 and R184. A212 is a binding site for ATP.

Belongs to the adenylate kinase family. Monomer.

Its subcellular location is the cytoplasm. The catalysed reaction is AMP + ATP = 2 ADP. The protein operates within purine metabolism; AMP biosynthesis via salvage pathway; AMP from ADP: step 1/1. Its function is as follows. Catalyzes the reversible transfer of the terminal phosphate group between ATP and AMP. Plays an important role in cellular energy homeostasis and in adenine nucleotide metabolism. In Chlamydia trachomatis serovar L2 (strain ATCC VR-902B / DSM 19102 / 434/Bu), this protein is Adenylate kinase.